A 426-amino-acid polypeptide reads, in one-letter code: D-amino acid dehydrogenase (426 aa).

3–17 (VVVLGAGVIGVTTAW) lines the FAD pocket.

It belongs to the DadA oxidoreductase family. It depends on FAD as a cofactor.

The catalysed reaction is a D-alpha-amino acid + A + H2O = a 2-oxocarboxylate + AH2 + NH4(+). It functions in the pathway amino-acid degradation; D-alanine degradation; NH(3) and pyruvate from D-alanine: step 1/1. Oxidative deamination of D-amino acids. The sequence is that of D-amino acid dehydrogenase from Phenylobacterium zucineum (strain HLK1).